Here is an 889-residue protein sequence, read N- to C-terminus: F-BAR domain only protein 1 (889 aa).

Positions 1–248 constitute an F-BAR domain; it reads MSYFGEHFWG…NIENVSVEML (248 aa). A mediates membrane-binding region spans residues 1–275; the sequence is MSYFGEHFWG…LDFEAYSAAA (275 aa). A coiled-coil region spans residues 156–195; it reads TSQKEMDKAETKTKKAAESLRRSVEKYNSARADFEQKMLD. Residues 267 to 442 form a mediates interaction with the adaptor protein complex AP-2 region; sequence DFEAYSAAAL…KNLFGPPLES (176 aa). Positions 294 to 352 are disordered; it reads LSRREREPEPPAAVDFLEPDSGTCPEVDEEGFTVRPDVTQNSTAEPSRFSSSDSDFDDE. Phosphoserine is present on residues serine 295, serine 347, and serine 372. Residues 382–596 form a disordered region; it reads ATAGSLILPP…SPLGSSAAST (215 aa). The segment covering 450-469 has biased composition (low complexity); the sequence is TGSSSLGFTSSPSPFSSSSP. Residues 496–511 are compositionally biased toward pro residues; sequence PGTPQSPPSCRAPPPE. Phosphoserine is present on serine 530. Residues 580–596 show a composition bias toward low complexity; the sequence is LSRSLSPSPLGSSAAST. The segment at 609–889 is mediates interaction with AGFG1, CALM, DAB2, EPS15, EPS15R, ITSN1 and clathrin; that stretch reads HGVSRGPSPV…FATGMYLVSC (281 aa). Serine 616 carries the post-translational modification Phosphoserine. Positions 625 to 888 constitute an MHD domain; the sequence is ALPIATAFTE…RFATGMYLVS (264 aa). The interval 826–849 is disordered; sequence AGGSGRLSASWEPLSGPSTPSPVA.

The protein belongs to the FCHO family. In terms of assembly, may oligomerize and form homotetramer. Interacts with AP2A2 and AP2B1; 2 subunits of the adaptor protein complex AP-2. Interacts with DAB2. Interacts with clathrin (CLTC or CLTCL1). Interacts with EPS15, EPS15R and ITSN1. Interacts with AGFG1 and CALM. May interact with ACVR1; linking this receptor to clathrin-mediated endocytosis. As to expression, predominantly expressed in lymphoid cells.

It localises to the membrane. It is found in the clathrin-coated pit. Its function is as follows. Functions in an early step of clathrin-mediated endocytosis. Has both a membrane binding/bending activity and the ability to recruit proteins essential to the formation of functional clathrin-coated pits. May regulate Bmp signaling by regulating clathrin-mediated endocytosis of Bmp receptors. Involved in the regulation of T-cell poliferation and activation. Affects TCR clustering upon receptor triggering and modulates its internalisation, playing a role in TCR-dependent T-cell activation. The protein is F-BAR domain only protein 1 of Homo sapiens (Human).